Here is an 81-residue protein sequence, read N- to C-terminus: Defensin-like protein 45 (81 aa).

Positions 1-27 are cleaved as a signal peptide; that stretch reads MAITKTSATFVLLIILAASLSNFNVLA. 4 disulfide bridges follow: cysteine 40–cysteine 79, cysteine 44–cysteine 67, cysteine 53–cysteine 77, and cysteine 57–cysteine 78.

This sequence belongs to the DEFL family.

It localises to the secreted. In Arabidopsis thaliana (Mouse-ear cress), this protein is Defensin-like protein 45.